The sequence spans 298 residues: Acetylglutamate kinase (298 aa).

Substrate contacts are provided by residues 69 to 70 (GG), Arg91, and Asn196.

This sequence belongs to the acetylglutamate kinase family. ArgB subfamily.

The protein resides in the cytoplasm. It catalyses the reaction N-acetyl-L-glutamate + ATP = N-acetyl-L-glutamyl 5-phosphate + ADP. The protein operates within amino-acid biosynthesis; L-arginine biosynthesis; N(2)-acetyl-L-ornithine from L-glutamate: step 2/4. Catalyzes the ATP-dependent phosphorylation of N-acetyl-L-glutamate. In Rhodopseudomonas palustris (strain ATCC BAA-98 / CGA009), this protein is Acetylglutamate kinase.